A 306-amino-acid chain; its full sequence is Putative transcriptional regulator (306 aa).

The HTH lysR-type domain occupies Met1–Thr61. The H-T-H motif DNA-binding region spans Phe21–Ser40.

The protein belongs to the LysR transcriptional regulatory family.

May have a role in the regulation of oprD expression. The polypeptide is Putative transcriptional regulator (Pseudomonas aeruginosa (strain ATCC 15692 / DSM 22644 / CIP 104116 / JCM 14847 / LMG 12228 / 1C / PRS 101 / PAO1)).